The sequence spans 518 residues: 2-isopropylmalate synthase (518 aa).

One can recognise a Pyruvate carboxyltransferase domain in the interval 24 to 275 (VYIFDTTLRD…KTNIKTQKLY (252 aa)). A divalent metal cation is bound by residues D33, H213, H215, and N249.

This sequence belongs to the alpha-IPM synthase/homocitrate synthase family. Homodimer. The cofactor is a divalent metal cation.

It carries out the reaction 3-methyl-2-oxobutanoate + acetyl-CoA + H2O = (2S)-2-isopropylmalate + CoA + H(+). The protein operates within amino-acid biosynthesis; L-leucine biosynthesis; L-leucine from 3-methyl-2-oxobutanoate: step 1/4. In terms of biological role, catalyzes the condensation of the acetyl group of acetyl-CoA with 3-methyl-2-oxobutanoate (2-oxoisovalerate) to form 3-carboxy-3-hydroxy-4-methylpentanoate (2-isopropylmalate). The protein is 2-isopropylmalate synthase (leuA) of Methanocaldococcus jannaschii (strain ATCC 43067 / DSM 2661 / JAL-1 / JCM 10045 / NBRC 100440) (Methanococcus jannaschii).